A 226-amino-acid polypeptide reads, in one-letter code: Cytidylate kinase (226 aa).

10–18 lines the ATP pocket; sequence GPASSGKST.

Belongs to the cytidylate kinase family. Type 1 subfamily.

The protein resides in the cytoplasm. The catalysed reaction is CMP + ATP = CDP + ADP. The enzyme catalyses dCMP + ATP = dCDP + ADP. This chain is Cytidylate kinase, found in Streptococcus pyogenes serotype M4 (strain MGAS10750).